The primary structure comprises 577 residues: MSQVQVQVQNPSAALSGSQILNKNQSLLSQPLMSIPSTTSSLPSENAGRPIQNSALPSASITSTSAAAESITPTVELNALCMKLGKKPMYKPVDPYSRMQSTYNYNMRGGAYPPRYFYPFPVPPLLYQVELSVGGQQFNGKGKTRQAAKHDAAAKALRILQNEPLPERLEVNGRESEEENLNKSEISQVFEIALKRNLPVNFEVARESGPPHMKNFVTKVSVGEFVGEGEGKSKKISKKNAAIAVLEELKKLPPLPAVERVKPRIKKKTKPIVKPQTSPEYGQGINPISRLAQIQQAKKEKEPEYTLLTERGLPRRREFVMQVKVGNHTAEGTGTNKKVAKRNAAENMLEILGFKVPQAQPTKPALKSEEKTPIKKPGDGRKVTFFEPGSGDENGTSNKEDEFRMPYLSHQQLPAGILPMVPEVAQAVGVSQGHHTKDFTRAAPNPAKATVTAMIARELLYGGTSPTAETILKNNISSGHVPHGPLTRPSEQLDYLSRVQGFQVEYKDFPKNNKNEFVSLINCSSQPPLISHGIGKDVESCHDMAALNILKLLSELDQQSTEMPRTGNGPMSVCGRC.

S2 bears the N-acetylserine mark. Positions 34-44 (SIPSTTSSLPS) are enriched in polar residues. A disordered region spans residues 34 to 55 (SIPSTTSSLPSENAGRPIQNSA). A DRBM 1 domain is found at 72–162 (TPTVELNALC…AAKALRILQN (91 aa)). At R108 the chain carries Asymmetric dimethylarginine. R115 bears the Asymmetric dimethylarginine; alternate mark. The residue at position 115 (R115) is an Omega-N-methylarginine; alternate. Residue S176 is modified to Phosphoserine. The 68-residue stretch at 184–251 (SEISQVFEIA…AIAVLEELKK (68 aa)) folds into the DRBM 2 domain. S278 is modified (phosphoserine). The 69-residue stretch at 286–354 (NPISRLAQIQ…AENMLEILGF (69 aa)) folds into the DRBM 3 domain. A disordered region spans residues 360–397 (QPTKPALKSEEKTPIKKPGDGRKVTFFEPGSGDENGTS). The segment covering 366–384 (LKSEEKTPIKKPGDGRKVT) has biased composition (basic and acidic residues). S390 bears the Phosphoserine mark.

In terms of assembly, binds tubulin. Binds with low affinity single-stranded RNA or DNA homopolymers. Interacts with CASC3 in an RNA-dependent manner. Identified in a mRNP complex, at least composed of DHX9, DDX3X, ELAVL1, HNRNPU, IGF2BP1, ILF3, PABPC1, PCBP2, PTBP2, STAU1, STAU2, SYNCRIP and YBX1. As to quaternary structure, (Microbial infection) Interacts with HERV-K rec and gag proteins. (Microbial infection) Interacts with HIV-1 GAG polyprotein. In terms of assembly, (Microbial infection) Interacts with influenza virus NS1 protein. As to quaternary structure, (Microbial infection) Interacts with Ebola virus NP, VP30 and VP35. Widely expressed. Expressed in brain, pancreas, heart, skeletal muscles, liver, lung, kidney and placenta.

It localises to the cytoplasm. The protein resides in the rough endoplasmic reticulum. Functionally, binds double-stranded RNA (regardless of the sequence) and tubulin. May play a role in specific positioning of mRNAs at given sites in the cell by cross-linking cytoskeletal and RNA components, and in stimulating their translation at the site. In terms of biological role, (Microbial infection) Plays a role in virus particles production of many viruses including of HIV-1, HERV-K, ebola virus and influenza virus. Acts by interacting with various viral proteins involved in particle budding process. The polypeptide is Double-stranded RNA-binding protein Staufen homolog 1 (STAU1) (Homo sapiens (Human)).